We begin with the raw amino-acid sequence, 292 residues long: 4-hydroxybenzoate octaprenyltransferase (292 aa).

9 helical membrane passes run 24–44, 47–67, 97–117, 119–139, 145–165, 171–191, 214–234, 238–258, and 270–290; these read IGTLLLLWPTYWALWLANAGM, LTNFIVFTLGVVIMRSAGCVI, AISLFILLITVAFLLVLMLSV, TILLSFGALALAFCYPFMKRY, VVLGAAFGWAIPMAFMASINA, WLLFIANICWTVAYDTMYAMV, HIIGLLNLAFIALMLSIGALN, LSYWLGLSVAIVLLVYQQVLI, and FLNNHYVGLAFFIGLLFSYPV.

It belongs to the UbiA prenyltransferase family. Requires Mg(2+) as cofactor.

It localises to the cell inner membrane. The enzyme catalyses all-trans-octaprenyl diphosphate + 4-hydroxybenzoate = 4-hydroxy-3-(all-trans-octaprenyl)benzoate + diphosphate. The protein operates within cofactor biosynthesis; ubiquinone biosynthesis. Its function is as follows. Catalyzes the prenylation of para-hydroxybenzoate (PHB) with an all-trans polyprenyl group. Mediates the second step in the final reaction sequence of ubiquinone-8 (UQ-8) biosynthesis, which is the condensation of the polyisoprenoid side chain with PHB, generating the first membrane-bound Q intermediate 3-octaprenyl-4-hydroxybenzoate. This chain is 4-hydroxybenzoate octaprenyltransferase, found in Pseudoalteromonas translucida (strain TAC 125).